We begin with the raw amino-acid sequence, 239 residues long: Probable transcriptional regulatory protein BT9727_0453 (239 aa).

It belongs to the TACO1 family. YeeN subfamily.

It localises to the cytoplasm. The sequence is that of Probable transcriptional regulatory protein BT9727_0453 from Bacillus thuringiensis subsp. konkukian (strain 97-27).